Consider the following 367-residue polypeptide: Glutamate 5-kinase (367 aa).

K10 contributes to the ATP binding site. Substrate-binding residues include S50, D137, and N149. ATP contacts are provided by residues 169–170 (TD) and 211–217 (TGGMGTK). One can recognise a PUA domain in the interval 275–353 (AGEITVDEGA…QQIDAILGYE (79 aa)).

It belongs to the glutamate 5-kinase family.

The protein resides in the cytoplasm. It catalyses the reaction L-glutamate + ATP = L-glutamyl 5-phosphate + ADP. Its pathway is amino-acid biosynthesis; L-proline biosynthesis; L-glutamate 5-semialdehyde from L-glutamate: step 1/2. In terms of biological role, catalyzes the transfer of a phosphate group to glutamate to form L-glutamate 5-phosphate. This Cronobacter sakazakii (strain ATCC BAA-894) (Enterobacter sakazakii) protein is Glutamate 5-kinase.